A 164-amino-acid polypeptide reads, in one-letter code: Protein-export protein SecB (164 aa).

This sequence belongs to the SecB family. As to quaternary structure, homotetramer, a dimer of dimers. One homotetramer interacts with 1 SecA dimer.

It localises to the cytoplasm. One of the proteins required for the normal export of preproteins out of the cell cytoplasm. It is a molecular chaperone that binds to a subset of precursor proteins, maintaining them in a translocation-competent state. It also specifically binds to its receptor SecA. This Zymomonas mobilis subsp. mobilis (strain ATCC 31821 / ZM4 / CP4) protein is Protein-export protein SecB.